The primary structure comprises 278 residues: Large ribosomal subunit protein uL2 (278 aa).

The segment at 214 to 278 (WLGKRPHNRG…IMRSRHQRKS (65 aa)) is disordered.

This sequence belongs to the universal ribosomal protein uL2 family. Part of the 50S ribosomal subunit. Forms a bridge to the 30S subunit in the 70S ribosome.

In terms of biological role, one of the primary rRNA binding proteins. Required for association of the 30S and 50S subunits to form the 70S ribosome, for tRNA binding and peptide bond formation. It has been suggested to have peptidyltransferase activity; this is somewhat controversial. Makes several contacts with the 16S rRNA in the 70S ribosome. The sequence is that of Large ribosomal subunit protein uL2 from Chelativorans sp. (strain BNC1).